We begin with the raw amino-acid sequence, 278 residues long: Tyrosine-protein phosphatase pmp1 (278 aa).

The Tyrosine-protein phosphatase domain maps to 60-214 (GPVCIYPPNI…LSEYQQIIRK (155 aa)). The active-site Phosphocysteine intermediate is Cys158. Positions 217 to 278 (SQGPYQSSSL…SSGSISNDAS (62 aa)) are disordered. A compositionally biased stretch (polar residues) spans 252 to 278 (SPSTSESSMFTNLRRTRSSGSISNDAS).

This sequence belongs to the protein-tyrosine phosphatase family. Non-receptor class dual specificity subfamily.

The catalysed reaction is O-phospho-L-tyrosyl-[protein] + H2O = L-tyrosyl-[protein] + phosphate. Dual specificity phosphatase that dephosphorylates MAP kinase pmk1 on a Tyr. Has a role in chloride ion homeostasis by inactivating this pmk1 MAP kinase pathway. The chain is Tyrosine-protein phosphatase pmp1 (pmp1) from Schizosaccharomyces pombe (strain 972 / ATCC 24843) (Fission yeast).